We begin with the raw amino-acid sequence, 258 residues long: Venom plasminogen activator LV-PA (258 aa).

The first 18 residues, 1–18 (MVLITVLANLLILQLSYA), serve as a signal peptide directing secretion. The propeptide occupies 19 to 24 (QKSSKL). Positions 25 to 249 (VFGGDECNIN…YTDWIQSIIA (225 aa)) constitute a Peptidase S1 domain. N-linked (GlcNAc...) asparagine glycosylation occurs at Asn44. Cysteines 50 and 66 form a disulfide. Residues His65 and Asp110 each act as charge relay system in the active site. 3 disulfide bridges follow: Cys142–Cys210, Cys174–Cys189, and Cys200–Cys225. The active-site Charge relay system is Ser204.

This sequence belongs to the peptidase S1 family. Snake venom subfamily. Monomer. Post-translationally, N-glycosylated. PubMed:17034951 shows that it contains approximately 10% carbohydrates, PubMed:10871053 shows that it contains approximately 20% carbohydrates. Expressed by the venom gland.

The protein resides in the secreted. With respect to regulation, inhibited by the serine protease inhibitors NPGB, PMSF, p-aminobenzamidine and aprotinin. Not inhibited by soybean trypsin inhibitor or EDTA. In terms of biological role, snake venom serine protease that activates plasminogen. Weakly hydrolyzes the alpha chain of human fibrinogen without releasing fibrinopeptide A. Does not hydrolyze plasma kallikrein or factor Xa. Does not clot fibrinogen. Does not affect platelet function. Induces hypotensive effects on rats. Shows a preferential cleavage at Lys-|-Xaa over Arg-|-Xaa bonds. This is Venom plasminogen activator LV-PA from Lachesis muta muta (Bushmaster).